We begin with the raw amino-acid sequence, 380 residues long: 1-deoxy-D-xylulose 5-phosphate reductoisomerase (380 aa).

NADPH contacts are provided by T10, G11, S12, I13, G35, and N121. K122 is a binding site for 1-deoxy-D-xylulose 5-phosphate. NADPH is bound at residue E123. D147 contributes to the Mn(2+) binding site. Residues S148, E149, S173, and H196 each contribute to the 1-deoxy-D-xylulose 5-phosphate site. A Mn(2+)-binding site is contributed by E149. G202 contacts NADPH. 1-deoxy-D-xylulose 5-phosphate is bound by residues S209, N214, K215, and E218. E218 is a Mn(2+) binding site.

It belongs to the DXR family. Requires Mg(2+) as cofactor. The cofactor is Mn(2+).

It carries out the reaction 2-C-methyl-D-erythritol 4-phosphate + NADP(+) = 1-deoxy-D-xylulose 5-phosphate + NADPH + H(+). The protein operates within isoprenoid biosynthesis; isopentenyl diphosphate biosynthesis via DXP pathway; isopentenyl diphosphate from 1-deoxy-D-xylulose 5-phosphate: step 1/6. Catalyzes the NADPH-dependent rearrangement and reduction of 1-deoxy-D-xylulose-5-phosphate (DXP) to 2-C-methyl-D-erythritol 4-phosphate (MEP). This is 1-deoxy-D-xylulose 5-phosphate reductoisomerase from Lachnospira eligens (strain ATCC 27750 / DSM 3376 / VPI C15-48 / C15-B4) (Eubacterium eligens).